Reading from the N-terminus, the 447-residue chain is Exodeoxyribonuclease 7 large subunit (447 aa).

Belongs to the XseA family. Heterooligomer composed of large and small subunits.

It is found in the cytoplasm. It catalyses the reaction Exonucleolytic cleavage in either 5'- to 3'- or 3'- to 5'-direction to yield nucleoside 5'-phosphates.. Its function is as follows. Bidirectionally degrades single-stranded DNA into large acid-insoluble oligonucleotides, which are then degraded further into small acid-soluble oligonucleotides. The polypeptide is Exodeoxyribonuclease 7 large subunit (Geobacter sulfurreducens (strain ATCC 51573 / DSM 12127 / PCA)).